A 361-amino-acid polypeptide reads, in one-letter code: mRNA export factor ICP27 homolog (361 aa).

Positions 1 to 15 are enriched in low complexity; sequence MEDSGNSSGSEASRS. The tract at residues 1 to 107 is disordered; the sequence is MEDSGNSSGS…SESARAAVSA (107 aa). Over residues 16 to 36 the composition is skewed to basic and acidic residues; that stretch reads GSEERRPVRERLGSRPPERRP. Residues 45–54 are RGG-box; sequence RRRRGGRGGR. A compositionally biased stretch (basic and acidic residues) spans 80 to 99; sequence RQEADRPDGGPDAPPDRLSE. Positions 253, 328, 332, and 337 each coordinate Zn(2+). The CHC2-type zinc-finger motif lies at 253–337; the sequence is CYLRDTPVDE…HKTGCDAPTC (85 aa).

Belongs to the HHV-1 ICP27 protein family. In terms of assembly, homodimer. Homodimerization is required for transactivation. Associates in a complex with RNA, and host export factors NXF1/TAP and ALYREF; these interactions allow nuclear export of viral transcripts. Interacts with three host shuttling SR proteins SRSF1, SRSF3 and SRSF7. Interacts with host SRPK1. Interacts with IE62; this interaction enhances IE62 transactivation.

It localises to the host cytoplasm. It is found in the host nucleus. In terms of biological role, multifunctional regulator of the expression of viral genes that mediates nuclear export of viral intronless mRNAs. This immediate early (EI) protein promotes the nuclear export of viral intronless mRNAs by interacting with mRNAs and host NXF1/TAP. This chain is mRNA export factor ICP27 homolog, found in Suid herpesvirus 1 (strain Kaplan) (SuHV-1).